Consider the following 1052-residue polypeptide: Focal adhesion kinase 1 (1052 aa).

The segment at Met-1 to Glu-27 is disordered. An N-acetylalanine modification is found at Ala-2. Tyr-5 is subject to Phosphotyrosine. Residues Leu-10–His-21 are compositionally biased toward polar residues. The residue at position 13 (Thr-13) is a Phosphothreonine. 2 positions are modified to phosphoserine: Ser-29 and Ser-54. Residues Arg-35–Ser-355 form the FERM domain. Lys-152 participates in a covalent cross-link: Glycyl lysine isopeptide (Lys-Gly) (interchain with G-Cter in SUMO). A Phosphotyrosine; by autocatalysis modification is found at Tyr-397. Residue Tyr-407 is modified to Phosphotyrosine. The region spanning Ile-422–Leu-680 is the Protein kinase domain. ATP contacts are provided by residues Ile-428–Gly-434, Lys-454, and Glu-500–Cys-502. Catalysis depends on Asp-546, which acts as the Proton acceptor. Tyr-570 carries the phosphotyrosine modification. Tyr-576 and Tyr-577 each carry phosphotyrosine; by RET and SRC. Ser-580 bears the Phosphoserine mark. The segment covering Lys-684 to Arg-697 has biased composition (basic and acidic residues). Disordered stretches follow at residues Lys-684–Gln-734 and Leu-839–Asp-922. Residues Gly-707 to His-1052 form an interaction with TGFB1I1 region. Ser-722 is modified (phosphoserine). Residue Ser-732 is modified to Phosphoserine; by CDK5. The span at Leu-839–Gly-849 shows a compositional bias: basic and acidic residues. Ser-843 is modified (phosphoserine). Tyr-861 carries the post-translational modification Phosphotyrosine. Residues Pro-869–Gly-880 show a composition bias toward pro residues. Phosphoserine is present on residues Ser-887 and Ser-910. Residues Pro-912 to His-1052 are interaction with ARHGEF28. Residue Thr-914 is modified to Phosphothreonine. At Tyr-925 the chain carries Phosphotyrosine.

Belongs to the protein kinase superfamily. Tyr protein kinase family. FAK subfamily. In terms of assembly, interacts (via first Pro-rich region) with CAS family members (via SH3 domain), including BCAR1, BCAR3, and CASS4. Interacts with NEDD9 (via SH3 domain). Interacts with GIT1. Interacts with SORBS1. Interacts with ARHGEF28. Interacts with SHB. Part of a complex composed of THSD1, PTK2/FAK1, TLN1 and VCL. Interacts with PXN and TLN1. Interacts with STAT1. Interacts with DCC. Interacts with WASL. Interacts with ARHGEF7. Interacts with GRB2 and GRB7. Component of a complex that contains at least FER, CTTN and PTK2/FAK1. Interacts with BMX. Interacts with TGFB1I1. Interacts with STEAP4. Interacts with ZFYVE21. Interacts with ESR1. Interacts with PIK3R1 or PIK3R2. Interacts with SRC, FGR, FLT4 and RET. Interacts with EPHA2 in resting cells; activation of EPHA2 recruits PTPN11, leading to dephosphorylation of PTK2/FAK1 and dissociation of the complex. Interacts with EPHA1 (kinase activity-dependent). Interacts with CD4; this interaction requires the presence of HIV-1 gp120. Interacts with PIAS1. Interacts with ARHGAP26 and SHC1. Interacts with RB1CC1; this inhibits PTK2/FAK1 activity and activation of downstream signaling pathways. Interacts with P53/TP53 and MDM2. Interacts with LPXN (via LD motif 3). Interacts with MISP. Interacts with CIB1 isoform 2. Interacts with CD36. Interacts with EMP2; regulates PTK2 activation and localization. Interacts with DSCAM. Interacts with AMBRA1. Interacts (when tyrosine-phosphorylated) with tensin TNS1; the interaction is increased by phosphorylation of TNS1. In terms of processing, phosphorylated on tyrosine residues upon activation, e.g. upon integrin signaling. Tyr-397 is the major autophosphorylation site, but other kinases can also phosphorylate this residue. Phosphorylation at Tyr-397 promotes interaction with SRC and SRC family members, leading to phosphorylation at Tyr-576, Tyr-577 and at additional tyrosine residues. FGR promotes phosphorylation at Tyr-397 and Tyr-576. FER promotes phosphorylation at Tyr-577, Tyr-861 and Tyr-925, even when cells are not adherent. Tyr-397, Tyr-576 and Ser-722 are phosphorylated only when cells are adherent. Phosphorylation at Tyr-397 is important for interaction with BMX, PIK3R1 and SHC1. Phosphorylation at Tyr-925 is important for interaction with GRB2. Dephosphorylated by PTPN11; PTPN11 is recruited to PTK2 via EPHA2 (tyrosine phosphorylated). Microtubule-induced dephosphorylation at Tyr-397 is crucial for the induction of focal adhesion disassembly; this dephosphorylation could be catalyzed by PTPN11 and regulated by ZFYVE21. Phosphorylation on tyrosine residues is enhanced by NTN1. Sumoylated; this enhances autophosphorylation. In terms of tissue distribution, detected in B and T-lymphocytes. Isoform 1 and isoform 6 are detected in lung fibroblasts (at protein level). Ubiquitous. Expressed in epithelial cells (at protein level).

The protein resides in the cell junction. It localises to the focal adhesion. It is found in the cell membrane. The protein localises to the cytoplasm. Its subcellular location is the perinuclear region. The protein resides in the cell cortex. It localises to the cytoskeleton. It is found in the microtubule organizing center. The protein localises to the centrosome. Its subcellular location is the nucleus. The protein resides in the cilium basal body. The enzyme catalyses L-tyrosyl-[protein] + ATP = O-phospho-L-tyrosyl-[protein] + ADP + H(+). Its activity is regulated as follows. Subject to autoinhibition, mediated by interactions between the FERM domain and the kinase domain. Activated by autophosphorylation at Tyr-397. This promotes interaction with SRC and phosphorylation at Tyr-576 and Tyr-577 in the kinase activation loop. Phosphorylation at Tyr-576 and Tyr-577 is required for maximal kinase activity. Inhibited by TAC544, TAE226, PF-573,228 and PF-562,271. Non-receptor protein-tyrosine kinase that plays an essential role in regulating cell migration, adhesion, spreading, reorganization of the actin cytoskeleton, formation and disassembly of focal adhesions and cell protrusions, cell cycle progression, cell proliferation and apoptosis. Required for early embryonic development and placenta development. Required for embryonic angiogenesis, normal cardiomyocyte migration and proliferation, and normal heart development. Regulates axon growth and neuronal cell migration, axon branching and synapse formation; required for normal development of the nervous system. Plays a role in osteogenesis and differentiation of osteoblasts. Functions in integrin signal transduction, but also in signaling downstream of numerous growth factor receptors, G-protein coupled receptors (GPCR), EPHA2, netrin receptors and LDL receptors. Forms multisubunit signaling complexes with SRC and SRC family members upon activation; this leads to the phosphorylation of additional tyrosine residues, creating binding sites for scaffold proteins, effectors and substrates. Regulates numerous signaling pathways. Promotes activation of phosphatidylinositol 3-kinase and the AKT1 signaling cascade. Promotes activation of MAPK1/ERK2, MAPK3/ERK1 and the MAP kinase signaling cascade. Promotes localized and transient activation of guanine nucleotide exchange factors (GEFs) and GTPase-activating proteins (GAPs), and thereby modulates the activity of Rho family GTPases. Signaling via CAS family members mediates activation of RAC1. Phosphorylates NEDD9 following integrin stimulation. Recruits the ubiquitin ligase MDM2 to P53/TP53 in the nucleus, and thereby regulates P53/TP53 activity, P53/TP53 ubiquitination and proteasomal degradation. Phosphorylates SRC; this increases SRC kinase activity. Phosphorylates ACTN1, ARHGEF7, GRB7, RET and WASL. Promotes phosphorylation of PXN and STAT1; most likely PXN and STAT1 are phosphorylated by a SRC family kinase that is recruited to autophosphorylated PTK2/FAK1, rather than by PTK2/FAK1 itself. Promotes phosphorylation of BCAR1; GIT2 and SHC1; this requires both SRC and PTK2/FAK1. Promotes phosphorylation of BMX and PIK3R1. Isoform 6 (FRNK) does not contain a kinase domain and inhibits PTK2/FAK1 phosphorylation and signaling. Its enhanced expression can attenuate the nuclear accumulation of LPXN and limit its ability to enhance serum response factor (SRF)-dependent gene transcription. Functionally, isoform 6 (FRNK) does not contain a kinase domain and inhibits PTK2/FAK1 phosphorylation and signaling. Its enhanced expression can attenuate the nuclear accumulation of LPXN and limit its ability to enhance serum response factor (SRF)-dependent gene transcription. The chain is Focal adhesion kinase 1 from Homo sapiens (Human).